The sequence spans 460 residues: Cyclic 2,3-diphosphoglycerate synthetase (460 aa).

As to quaternary structure, homodimer.

The protein resides in the cytoplasm. The catalysed reaction is (2R)-2,3-bisphosphoglycerate + ATP + H(+) = cyclic (2R)-2,3-bisphosphoglycerate + ADP + phosphate. In terms of biological role, catalyzes the formation of cyclic 2,3-diphosphoglycerate (cDPG) by formation of an intramolecular phosphoanhydride bond at the expense of ATP. It is also able to catalyze the hydrolysis of cDPG but with significant slower rates (8-10 times). May be involved in thermoadaptation. The chain is Cyclic 2,3-diphosphoglycerate synthetase (cpgS) from Methanothermus fervidus (strain ATCC 43054 / DSM 2088 / JCM 10308 / V24 S).